Reading from the N-terminus, the 457-residue chain is Succinate-semialdehyde dehydrogenase [NADP(+)] 1 (457 aa).

Residue 209 to 214 (GSEPAG) participates in NADP(+) binding. Catalysis depends on residues Glu-231 and Cys-265.

It belongs to the aldehyde dehydrogenase family.

The catalysed reaction is succinate semialdehyde + NAD(+) + H2O = succinate + NADH + 2 H(+). It catalyses the reaction succinate semialdehyde + NADP(+) + H2O = succinate + NADPH + 2 H(+). Its function is as follows. Catalyzes the NADP(+)-dependent oxidation of succinate semialdehyde to succinate. It is believed to be the main source of succinate semialdehyde dehydrogenase activity in Mycobacterium. The polypeptide is Succinate-semialdehyde dehydrogenase [NADP(+)] 1 (gabD1) (Mycobacterium bovis (strain ATCC BAA-935 / AF2122/97)).